Here is a 1055-residue protein sequence, read N- to C-terminus: Cellulose synthase A catalytic subunit 9 [UDP-forming] (1055 aa).

Residues 1–268 (MEASAGLVAG…ASSKVNPYRM (268 aa)) lie on the Cytoplasmic side of the membrane. 8 residues coordinate Zn(2+): cysteine 37, cysteine 40, cysteine 56, cysteine 59, cysteine 64, cysteine 67, cysteine 79, and cysteine 82. Residues 37–83 (CEICGDEVGRTVDGDLFVACNECGFPVCRPCYEYERREGTQNCPQCK) form an RING-type; degenerate zinc finger. The chain crosses the membrane as a helical span at residues 269–289 (VIILRLVVLGFFLRYRILHPV). The Extracellular portion of the chain corresponds to 290-291 (PD). The helical transmembrane segment at 292-312 (AIPLWLTSIICEIWFAVSWIL) threads the bilayer. Topologically, residues 313–831 (DQFPKWYPID…LERFSYINTT (519 aa)) are cytoplasmic. The UDP-alpha-D-glucose site is built by serine 351, lysine 357, glutamate 358, and aspartate 387. Residue aspartate 387 is part of the active site. Residues 439–468 (NFVQERRAMKREYEEFKVRINALVAKAQKV) are a coiled coil. Lysine 528 provides a ligand contact to UDP-alpha-D-glucose. The Mn(2+) site is built by lysine 529 and aspartate 553. Aspartate 753 is a catalytic residue. The chain crosses the membrane as a helical span at residues 832–852 (IYPFTSLPLLAYCTLPAVCLL). Topologically, residues 853–860 (TGKFIMPP) are extracellular. Residues 861 to 881 (ISTFASLFFIALFISIFATGI) form a helical membrane-spanning segment. The Cytoplasmic segment spans residues 882–899 (LEMRWSGVSIEEWWRNEQ). A helical transmembrane segment spans residues 900 to 920 (FWVIGGVSAHLFAVVQGLLKV). The Extracellular portion of the chain corresponds to 921-951 (LAGIDTNFTVTSKATGDEDDEFAELYAFKWT). Asparagine 927 is a glycosylation site (N-linked (GlcNAc...) asparagine). Residues 952–972 (TLLIPPTTLLILNIIGVVAGV) traverse the membrane as a helical segment. Over 973 to 983 (SDAINNGSEAW) the chain is Cytoplasmic. The chain crosses the membrane as a helical span at residues 984–1004 (GPLFGKLFFAFWVIVHLYPFL). Over 1005–1013 (KGLMGRQNR) the chain is Extracellular. The helical transmembrane segment at 1014 to 1034 (TPTIVVIWSVLLASIFSLLWV) threads the bilayer. The Cytoplasmic portion of the chain corresponds to 1035-1055 (RIDPFTIKARGPDVRQCGINC).

Belongs to the glycosyltransferase 2 family. Plant cellulose synthase subfamily. Mn(2+) is required as a cofactor. It depends on Zn(2+) as a cofactor.

The protein localises to the cell membrane. It carries out the reaction [(1-&gt;4)-beta-D-glucosyl](n) + UDP-alpha-D-glucose = [(1-&gt;4)-beta-D-glucosyl](n+1) + UDP + H(+). The protein operates within glycan metabolism; plant cellulose biosynthesis. In terms of biological role, catalytic subunit of cellulose synthase terminal complexes ('rosettes'), required for beta-1,4-glucan microfibril crystallization, a major mechanism of the cell wall formation. Involved in the secondary cell wall formation. The chain is Cellulose synthase A catalytic subunit 9 [UDP-forming] (CESA9) from Oryza sativa subsp. indica (Rice).